The chain runs to 505 residues: Maturase K (505 aa).

This sequence belongs to the intron maturase 2 family. MatK subfamily.

Its subcellular location is the plastid. It is found in the chloroplast. Usually encoded in the trnK tRNA gene intron. Probably assists in splicing its own and other chloroplast group II introns. This chain is Maturase K, found in Blitum bonus-henricus (Good King Henry).